The primary structure comprises 120 residues: uncharacterized protein (120 aa).

The signal sequence occupies residues 1 to 19; sequence MTSFAVVARLITRAPRVRA. Disordered stretches follow at residues 48–71 and 90–120; these read VAKK…DKAK and DTVT…KNLK. Basic and acidic residues predominate over residues 90–103; sequence DTVTGKTEETKESI.

This is an uncharacterized protein from Arabidopsis thaliana (Mouse-ear cress).